A 658-amino-acid polypeptide reads, in one-letter code: UvrABC system protein B (658 aa).

Residues 26 to 413 (EGINSGKKKQ…SPEVIEQIIR (388 aa)) form the Helicase ATP-binding domain. 39–46 (GATGTGKT) serves as a coordination point for ATP. A Beta-hairpin motif is present at residues 92-115 (YYDYYQPEAYVPQTDTFIEKDAQI). The Helicase C-terminal domain occupies 430–596 (QIDDLLGEIQ…TIQKGVRDVI (167 aa)). A UVR domain is found at 622 to 657 (EKTIAKMEAEMKEAAKALDFERAAELRDLLLELKAE).

Belongs to the UvrB family. Forms a heterotetramer with UvrA during the search for lesions. Interacts with UvrC in an incision complex.

It localises to the cytoplasm. In terms of biological role, the UvrABC repair system catalyzes the recognition and processing of DNA lesions. A damage recognition complex composed of 2 UvrA and 2 UvrB subunits scans DNA for abnormalities. Upon binding of the UvrA(2)B(2) complex to a putative damaged site, the DNA wraps around one UvrB monomer. DNA wrap is dependent on ATP binding by UvrB and probably causes local melting of the DNA helix, facilitating insertion of UvrB beta-hairpin between the DNA strands. Then UvrB probes one DNA strand for the presence of a lesion. If a lesion is found the UvrA subunits dissociate and the UvrB-DNA preincision complex is formed. This complex is subsequently bound by UvrC and the second UvrB is released. If no lesion is found, the DNA wraps around the other UvrB subunit that will check the other stand for damage. This chain is UvrABC system protein B, found in Bacillus cereus (strain ATCC 14579 / DSM 31 / CCUG 7414 / JCM 2152 / NBRC 15305 / NCIMB 9373 / NCTC 2599 / NRRL B-3711).